The primary structure comprises 953 residues: Coatomer subunit beta (953 aa).

T2 bears the N-acetylthreonine mark. HEAT repeat units lie at residues 96–131 (HEMI…KEAE), 132–168 (LLEP…NFEN), 240–276 (SERA…SAPT), 277–314 (AIKA…HPAH), 316–353 (RVLQ…SRNV), and 396–433 (DMAA…RFDN). The residue at position 494 (K494) is an N6-acetyllysine.

In terms of assembly, oligomeric complex that consists of at least the alpha, beta, beta', gamma, delta, epsilon and zeta subunits. Interacts with SCYL1. Interacts with CAPN8. Interacts with COPG1. Interacts with ARF1 (myristoylated); this interaction is required for binding of COPB1 to Golgi membranes. Interacts (via trunk domain) with ARF1 (via switch I region); the interaction is direct. Interacts with KCNK2 (via N-terminus); this interaction increases the channel-mediated whole cell currents and promotes plasma membrane expression of KCNK2. Interacts with PRKCE. Interacts with STX17. Interacts with TMEM115. Interacts with TMEM41B. In terms of processing, proteolytically cleaved between Ser-528 and Ser-529 by CAPN8.

It is found in the cytoplasm. Its subcellular location is the golgi apparatus membrane. The protein localises to the cytoplasmic vesicle. The protein resides in the COPI-coated vesicle membrane. It localises to the cell membrane. It is found in the endoplasmic reticulum-Golgi intermediate compartment. Its subcellular location is the microsome membrane. Functionally, the coatomer is a cytosolic protein complex that binds to dilysine motifs and reversibly associates with Golgi non-clathrin-coated vesicles, which further mediate biosynthetic protein transport from the ER, via the Golgi up to the trans Golgi network. Coatomer complex is required for budding from Golgi membranes, and is essential for the retrograde Golgi-to-ER transport of dilysine-tagged proteins. In mammals, the coatomer can only be recruited by membranes associated to ADP-ribosylation factors (ARFs), which are small GTP-binding proteins; the complex also influences the Golgi structural integrity, as well as the processing, activity, and endocytic recycling of LDL receptors. Involved in the Golgi disassembly and reassembly processes during cell cycle. Involved in autophagy by playing a role in early endosome function. Plays a role in organellar compartmentalization of secretory compartments including endoplasmic reticulum (ER)-Golgi intermediate compartment (ERGIC), Golgi, trans-Golgi network (TGN) and recycling endosomes, and in biosynthetic transport of CAV1. Plays a functional role in facilitating the transport of kappa-type opioid receptor mRNAs into axons and enhances translation of these proteins in the axonal compartment of dorsal root ganglion (DRG) cells. Required for limiting lipid storage in lipid droplets. Involved in lipid homeostasis by regulating the presence of perilipin family members PLIN2 and PLIN3 at the lipid droplet surface and promoting the association of adipocyte triglyceride lipase (PNPLA2) with the lipid droplet surface to mediate lipolysis. The sequence is that of Coatomer subunit beta (Copb1) from Rattus norvegicus (Rat).